The primary structure comprises 183 residues: Ferritin heavy chain (183 aa).

The residue at position 1 (Met-1) is an N-acetylmethionine. At Thr-2 the chain carries N-acetylthreonine; in Ferritin heavy chain, N-terminally processed. Residues 11-160 (QNYHQDSEAA…DHVTNLRKMG (150 aa)) form the Ferritin-like diiron domain. 5 residues coordinate Fe cation: Glu-28, Glu-63, His-66, Glu-108, and Gln-142. Residues Ser-179 and Ser-183 each carry the phosphoserine modification.

The protein belongs to the ferritin family. As to quaternary structure, oligomer of 24 subunits. There are two types of subunits: L (light) chain and H (heavy) chain. The major chain can be light or heavy, depending on the species and tissue type. The functional molecule forms a roughly spherical shell with a diameter of 12 nm and contains a central cavity into which the insoluble mineral iron core is deposited. Interacts with NCOA4; NCOA4 promotes targeting of the iron-binding ferritin complex to autolysosomes following starvation or iron depletion.

The protein resides in the cytoplasm. Its subcellular location is the lysosome. It localises to the cytoplasmic vesicle. The protein localises to the autophagosome. The enzyme catalyses 4 Fe(2+) + O2 + 4 H(+) = 4 Fe(3+) + 2 H2O. Stores iron in a soluble, non-toxic, readily available form. Important for iron homeostasis. Has ferroxidase activity. Iron is taken up in the ferrous form and deposited as ferric hydroxides after oxidation. Also plays a role in delivery of iron to cells. Mediates iron uptake in capsule cells of the developing kidney. Delivery to lysosomes is mediated by the cargo receptor NCOA4 for autophagic degradation and release of iron. The polypeptide is Ferritin heavy chain (FTH1) (Felis catus (Cat)).